Consider the following 833-residue polypeptide: Transcription factor MBP1 (833 aa).

One can recognise an HTH APSES-type domain in the interval 5-111; sequence IYSARYSGVD…FTQTDGSASP (107 aa). The H-T-H motif DNA-binding region spans 36–57; sequence ATHILKAANFAKAKRTRILEKE. 2 disordered regions span residues 104 to 223 and 280 to 329; these read QTDG…QSPT and QQSS…SPII. The residue at position 110 (S110) is a Phosphoserine. Basic residues predominate over residues 115–129; sequence PKHHHASKVDRKKAI. The span at 139–149 shows a compositional bias: basic and acidic residues; the sequence is ETKRNNKKAEE. Polar residues predominate over residues 201 to 223; sequence PNSSISTTQLPSIRSTMGPQSPT. A compositionally biased stretch (low complexity) spans 280–307; that stretch reads QQSSLIQTQQTESMATSVSSSPSLPTSP. T325 bears the Phosphothreonine mark. Phosphoserine occurs at positions 326 and 330. 2 ANK repeats span residues 394–423 and 512–541; these read ELHT…SIRS and NGDT…LTTI. At S827 the chain carries Phosphoserine.

Component of the transcription complex MCB-binding factor (MBF) composed of SWI6 and MBP1. Interacts with MSA1.

Its subcellular location is the nucleus. Its function is as follows. Binds to MCB elements (Mlu I cell cycle box) found in the promoter of most DNA synthesis genes. Transcriptional activation by MBF has an important role in the transition from G1 to S phase. It may have a dual role in that it behaves as an activator of transcription at the G1-S boundary and as a repressor during other stages of the cell cycle. This chain is Transcription factor MBP1 (MBP1), found in Saccharomyces cerevisiae (strain ATCC 204508 / S288c) (Baker's yeast).